A 478-amino-acid polypeptide reads, in one-letter code: METLSQRITSMESVQLQGIAVAFVTASALYYVLPAAISHIQLSALPMLGKTEVVVIPPKLLSELSKSPRTLSAEIAGNEFIAGKYTKVKALTPILLHSITKYLIPSLGRNAVVMSEEVSNAVRLGIPTCNDWTGVNIYPKIMRMVTVSTGRFLVGSELNRSEDYIDTVHNYALDVSSAQSAVHKMHPWIRPLLAEWLPEIRRLRKRTEEAFALFESLIKERMKMQRELSESELPDDLLQWMIANRHNYNNEDAHDLVYSQLGLTFTANHSTASTITNALYTLATMGDLIDVIRDDITQALAESGGQFTSKALDSMWKFDSFIKETVRMNPLVMSVAVRKVVEPIKLPSGQVIPTGVTLETPLVAVNLDDQIFPNADVFDPMRFYNLREKDRKQGDAREAEFNQLISSSTSHMSWGFGKHTCPGRAFAAQQIKMILAHIILRYDIKLVGDSTDRYENIPKGHLSLPDPTKDILMKRREI.

The chain crosses the membrane as a helical span at residues 20 to 42; that stretch reads AVAFVTASALYYVLPAAISHIQL. Asn159 and Asn268 each carry an N-linked (GlcNAc...) asparagine glycan.

It belongs to the cytochrome P450 family. It depends on heme as a cofactor.

It localises to the membrane. Its pathway is mycotoxin biosynthesis. In terms of biological role, cytochrome P450 monooxygenase; part of the core atranone cluster (CAC) which products are predicted to catalyze most or all steps of mycotoxin atranone synthesis, starting from geranylgeranyl pyrophosphate (GGPP). The initial cyclization of GGPP to dolabellane is probably performed by the terpene cyclase ATR13. The Baeyer-Villiger oxidation near the end of the atranone synthesis, which converts atranones D and E to atranones F and G is predicted to be catalyzed by the monooxygenase ATR8. Of the CAC's other predicted gene products, the reducing PKS ATR6 might synthesize a polyketide chain. This polyketide is probably transferred onto the atranone backbone by the polyketide transferase ATR5. Other predicted CAC products include 4 oxygenases (ATR2, ATR3, ATR4, and ATR14), 3 short-chain reductases (ATR7, ATR9, and ATR10), and a methyltransferase (ATR12). These may all be involved in the various steps of atranone biosynthesis, although their specific roles must await experimental determination. The protein is Cytochrome P450 monooxygenase ATR3 of Stachybotrys chlorohalonatus (strain IBT 40285).